We begin with the raw amino-acid sequence, 285 residues long: Single myb histone 3 (285 aa).

The disordered stretch occupies residues 1-35 (MGAPKQKWTSEEEDALRRGVRKHGAGKWRTIQKDP). One can recognise an HTH myb-type domain in the interval 1–60 (MGAPKQKWTSEEEDALRRGVRKHGAGKWRTIQKDPQFSPILSSRSNIDLKDKWRNLSFSA). Positions 28–56 (WRTIQKDPQFSPILSSRSNIDLKDKWRNL) form a DNA-binding region, H-T-H motif. The H15 domain occupies 113–181 (TPPKYGAMIM…KVDNFYRLPD (69 aa)). Positions 226 to 255 (VKVTDAEAKAHDAHDQMMEAERMLKMAEDT) form a coiled coil.

It belongs to the histone H1/H5 family. SMH subfamily. In terms of assembly, forms a homodimer and heterodimers.

It localises to the nucleus. The protein localises to the chromosome. It is found in the nucleolus. The protein resides in the telomere. Binds preferentially double-stranded telomeric repeats, but may also bind to the single telomeric strand. This is Single myb histone 3 (SMH3) from Zea mays (Maize).